Here is a 595-residue protein sequence, read N- to C-terminus: Aspartate--tRNA(Asp/Asn) ligase (595 aa).

Position 174 (Glu-174) interacts with L-aspartate. The aspartate stretch occupies residues 198 to 201 (QLFK). Arg-220 is an L-aspartate binding site. ATP is bound by residues 220–222 (RDE) and Gln-229. An L-aspartate-binding site is contributed by His-452. Position 486 (Glu-486) interacts with ATP. Arg-493 is a binding site for L-aspartate. 538-541 (GLDR) serves as a coordination point for ATP.

The protein belongs to the class-II aminoacyl-tRNA synthetase family. Type 1 subfamily. In terms of assembly, homodimer.

The protein resides in the cytoplasm. The enzyme catalyses tRNA(Asx) + L-aspartate + ATP = L-aspartyl-tRNA(Asx) + AMP + diphosphate. In terms of biological role, aspartyl-tRNA synthetase with relaxed tRNA specificity since it is able to aspartylate not only its cognate tRNA(Asp) but also tRNA(Asn). Reaction proceeds in two steps: L-aspartate is first activated by ATP to form Asp-AMP and then transferred to the acceptor end of tRNA(Asp/Asn). In Nitrosococcus oceani (strain ATCC 19707 / BCRC 17464 / JCM 30415 / NCIMB 11848 / C-107), this protein is Aspartate--tRNA(Asp/Asn) ligase.